The primary structure comprises 467 residues: 3-isopropylmalate dehydratase large subunit (467 aa).

The [4Fe-4S] cluster site is built by cysteine 347, cysteine 407, and cysteine 410.

It belongs to the aconitase/IPM isomerase family. LeuC type 1 subfamily. As to quaternary structure, heterodimer of LeuC and LeuD. It depends on [4Fe-4S] cluster as a cofactor.

The enzyme catalyses (2R,3S)-3-isopropylmalate = (2S)-2-isopropylmalate. It functions in the pathway amino-acid biosynthesis; L-leucine biosynthesis; L-leucine from 3-methyl-2-oxobutanoate: step 2/4. Functionally, catalyzes the isomerization between 2-isopropylmalate and 3-isopropylmalate, via the formation of 2-isopropylmaleate. The protein is 3-isopropylmalate dehydratase large subunit of Trichormus variabilis (strain ATCC 29413 / PCC 7937) (Anabaena variabilis).